A 487-amino-acid polypeptide reads, in one-letter code: DNA polymerase delta small subunit (487 aa).

M1 carries the post-translational modification N-acetylmethionine. A Phosphoserine modification is found at S20.

It belongs to the DNA polymerase delta/II small subunit family. In terms of assembly, DNA polymerase delta is a heterotrimer of POL3, POL32 and HYS2.

The protein localises to the nucleus. The enzyme catalyses DNA(n) + a 2'-deoxyribonucleoside 5'-triphosphate = DNA(n+1) + diphosphate. In terms of biological role, DNA polymerase delta (DNA polymerase III) participates in chromosomal DNA replication. It is required during synthesis of the leading and lagging DNA strands at the replication fork and binds at/or near replication origins and moves along DNA with the replication fork. It has 3'-5' proofreading exonuclease activity that correct errors arising during DNA replication. It is also involved in DNA synthesis during DNA repair. The chain is DNA polymerase delta small subunit (POL31) from Saccharomyces cerevisiae (strain ATCC 204508 / S288c) (Baker's yeast).